The following is a 168-amino-acid chain: Quinol oxidase subunit 2 (168 aa).

A helical membrane pass occupies residues 9 to 31 (EVWFIVMLVLVLIFFSWNVYYLS).

The protein belongs to the cytochrome c oxidase subunit 2 family.

It localises to the cell membrane. It carries out the reaction 2 a quinol + O2 = 2 a quinone + 2 H2O. Its function is as follows. The terminal oxidase is the component of the respiratory chain that catalyzes the reduction of oxygen to water. Subunits 1-3 form the functional core of the enzyme complex. In terms of biological role, subunit 2 transfers the electrons from caldariella quinol to the bimetallic center of the catalytic subunit 1 that is formed by heme A3 and Cu(B). In Sulfolobus acidocaldarius (strain ATCC 33909 / DSM 639 / JCM 8929 / NBRC 15157 / NCIMB 11770), this protein is Quinol oxidase subunit 2 (soxA).